A 185-amino-acid chain; its full sequence is Ribosome-recycling factor (185 aa).

The protein belongs to the RRF family.

The protein resides in the cytoplasm. Responsible for the release of ribosomes from messenger RNA at the termination of protein biosynthesis. May increase the efficiency of translation by recycling ribosomes from one round of translation to another. In Enterococcus faecalis (strain ATCC 700802 / V583), this protein is Ribosome-recycling factor.